Reading from the N-terminus, the 514-residue chain is Cytochrome P450 monooxygenase verB (514 aa).

Residues 5 to 25 (WLSASVLITAVILLVDYLNYY) form a helical membrane-spanning segment. Heme is bound at residue Cys457.

The protein belongs to the cytochrome P450 family. It depends on heme as a cofactor.

It is found in the membrane. It participates in mycotoxin biosynthesis. Its function is as follows. Cytochrome P450 monooxygenase; part of the gene cluster that mediates the biosynthesis of 11'-deoxyverticillin A, one of the dimeric epipolythiodioxopiperazines (ETPs) from the verticillin family that act as mycotoxins. 11'-deoxyverticillin A is required for normal conidiation. The nonribosomal peptide synthetase verP is speculated to be responsible for condensation of amino acids to form the carbon skeleton of verticillin, whereas the cluster-specific tailoring enzymes are involved in further modifications leading to the production of 11'-deoxyverticillin A. The polypeptide is Cytochrome P450 monooxygenase verB (Clonostachys rogersoniana).